A 329-amino-acid polypeptide reads, in one-letter code: Putative 1-aminocyclopropane-1-carboxylate deaminase (329 aa).

Lys-54 is modified (N6-(pyridoxal phosphate)lysine).

The protein belongs to the ACC deaminase/D-cysteine desulfhydrase family. The cofactor is pyridoxal 5'-phosphate.

It catalyses the reaction 1-aminocyclopropane-1-carboxylate + H2O = 2-oxobutanoate + NH4(+). The protein is Putative 1-aminocyclopropane-1-carboxylate deaminase of Pyrococcus furiosus (strain ATCC 43587 / DSM 3638 / JCM 8422 / Vc1).